The primary structure comprises 233 residues: Large ribosomal subunit protein uL1 (233 aa).

It belongs to the universal ribosomal protein uL1 family. Part of the 50S ribosomal subunit.

In terms of biological role, binds directly to 23S rRNA. The L1 stalk is quite mobile in the ribosome, and is involved in E site tRNA release. Protein L1 is also a translational repressor protein, it controls the translation of the L11 operon by binding to its mRNA. In Parvibaculum lavamentivorans (strain DS-1 / DSM 13023 / NCIMB 13966), this protein is Large ribosomal subunit protein uL1.